Reading from the N-terminus, the 814-residue chain is Tax1-binding protein 1 homolog (814 aa).

Residues Ser-124, Ser-138, and Ser-225 each carry the phosphoserine modification. A coiled-coil region spans residues 144-623 (TTKAGLLELK…KELTKSLEDQ (480 aa)). Residues 320-420 (EEISKLQSCL…ELQLHAVKKD (101 aa)) are oligomerization. At Ser-619 the chain carries Phosphoserine; by IKKA. Ser-632 is modified (phosphoserine). A Phosphoserine; by IKKA modification is found at Ser-693. The segment at 701 to 733 (SQPARNLSRPDGLEDPEDSREDENVPIPPDPAN) is disordered. 2 consecutive UBZ1-type zinc fingers follow at residues 752–778 (HKKC…VESH) and 779–805 (WKVC…VQTH). Zn(2+) contacts are provided by Cys-755, Cys-758, His-774, His-778, Cys-782, Cys-785, His-801, and His-805.

As to quaternary structure, homooligomer. Interacts with TNFAIP3. Interacts with STARD13. Interacts with MYO6. Interacts with TOM1; the interaction is indirect and is mediated by MYO6, which acts as a bridge between TOM1 and TAX1BP1. Interacts with MAVS; this interaction induces MAVS polyubiquitination. Interacts with TNIP1. Interacts with TRAF6; this interaction mediates deubiquitination of TRAF6 and inhibition of NF-kappa-B activation. Interacts with RIPK1; this interaction negatively regulates RIPK1 ubiquitination. Interacts with NBR1. Interacts with TBK1. Interacts with RB1CC1. Interacts with SQSTM1. Interacts with AZI2. Interacts with TICAM1 and TRIM32; these interactions target TICAM1 to TAX1BP1-mediated selective autophagic degradation. Phosphorylated in the C-terminal region by CHUK/IKKA leading to NF-kappa-B signaling down-regulation.

The protein resides in the cytoplasm. The protein localises to the mitochondrion. It is found in the preautophagosomal structure. Its subcellular location is the cytoplasmic vesicle. It localises to the autophagosome. In terms of biological role, ubiquitin-binding adapter that participates in inflammatory, antiviral and innate immune processes as well as selective autophagy regulation. Plays a key role in the negative regulation of NF-kappa-B and IRF3 signalings by acting as an adapter for the ubiquitin-editing enzyme A20/TNFAIP3 to bind and inactivate its substrates. Disrupts the interactions between the E3 ubiquitin ligase TRAF3 and TBK1/IKBKE to attenuate 'Lys63'-linked polyubiquitination of TBK1 and thereby IFN-beta production. Also recruits A20/TNFAIP3 to ubiquitinated signaling proteins TRAF6 and RIPK1, leading to their deubiquitination and disruption of IL-1 and TNF-induced NF-kappa-B signaling pathways. Inhibits virus-induced apoptosis by inducing the 'Lys-48'-linked polyubiquitination and degradation of MAVS via recruitment of the E3 ligase ITCH, thereby attenuating MAVS-mediated apoptosis signaling. As a macroautophagy/autophagy receptor, facilitates the xenophagic clearance of pathogenic bacteria such as Salmonella typhimurium and Mycobacterium tuberculosis. Upon NBR1 recruitment to the SQSTM1-ubiquitin condensates, acts as the major recruiter of RB1CC1 to these ubiquitin condensates to promote their autophagic degradation. Mediates the autophagic degradation of other substrates including TICAM1. This Mus musculus (Mouse) protein is Tax1-binding protein 1 homolog (Tax1bp1).